We begin with the raw amino-acid sequence, 864 residues long: Protein translocase subunit SecA (864 aa).

Residues glutamine 87, 105–109 (GEGKT), and aspartate 512 contribute to the ATP site.

This sequence belongs to the SecA family. Monomer and homodimer. Part of the essential Sec protein translocation apparatus which comprises SecA, SecYEG and auxiliary proteins SecDF-YajC and YidC.

The protein localises to the cell inner membrane. The protein resides in the cytoplasm. The catalysed reaction is ATP + H2O + cellular proteinSide 1 = ADP + phosphate + cellular proteinSide 2.. In terms of biological role, part of the Sec protein translocase complex. Interacts with the SecYEG preprotein conducting channel. Has a central role in coupling the hydrolysis of ATP to the transfer of proteins into and across the cell membrane, serving as an ATP-driven molecular motor driving the stepwise translocation of polypeptide chains across the membrane. The chain is Protein translocase subunit SecA from Buchnera aphidicola subsp. Cinara cedri (strain Cc).